The following is a 284-amino-acid chain: Cell division protein DivIB (284 aa).

Residues 1-10 (MAWLRKKEQQ) show a composition bias toward basic and acidic residues. Positions 1-38 (MAWLRKKEQQSDPLTPWQQYQARQQQTPRHDRRQKPKL) are disordered. The Cytoplasmic segment spans residues 1 to 56 (MAWLRKKEQQSDPLTPWQQYQARQQQTPRHDRRQKPKLDVNLPKIQTLRRRKLVKN). The chain crosses the membrane as a helical span at residues 57-77 (LVLILLPLLLLLGVFGYFASP). At 78-284 (LSKVGLVSVQ…YSSSEKSSND (207 aa)) the chain is on the extracellular side. The POTRA domain maps to 79-150 (SKVGLVSVQG…NRIIIKTSEY (72 aa)).

The protein belongs to the FtsQ/DivIB family. DivIB subfamily.

It localises to the cell membrane. Cell division protein that may be involved in stabilizing or promoting the assembly of the division complex. This is Cell division protein DivIB from Lacticaseibacillus rhamnosus (strain ATCC 53103 / LMG 18243 / GG) (Lactobacillus rhamnosus).